Consider the following 547-residue polypeptide: Chaperonin GroEL 2 (547 aa).

Residues 30 to 33 (TLGP), Lys-51, 87 to 91 (DGTTT), Gly-415, 479 to 481 (NAA), and Asp-495 each bind ATP. Residues 525–547 (PKEESAAPAGGGMGGMGGMGGMM) form a disordered region. Over residues 533–547 (AGGGMGGMGGMGGMM) the composition is skewed to gly residues.

Belongs to the chaperonin (HSP60) family. In terms of assembly, forms a cylinder of 14 subunits composed of two heptameric rings stacked back-to-back. Interacts with the co-chaperonin GroES.

The protein resides in the cytoplasm. The enzyme catalyses ATP + H2O + a folded polypeptide = ADP + phosphate + an unfolded polypeptide.. Its function is as follows. Together with its co-chaperonin GroES, plays an essential role in assisting protein folding. The GroEL-GroES system forms a nano-cage that allows encapsulation of the non-native substrate proteins and provides a physical environment optimized to promote and accelerate protein folding. The chain is Chaperonin GroEL 2 from Anaeromyxobacter dehalogenans (strain 2CP-C).